Here is a 94-residue protein sequence, read N- to C-terminus: Small ribosomal subunit protein uS17 (94 aa).

Belongs to the universal ribosomal protein uS17 family. As to quaternary structure, part of the 30S ribosomal subunit.

Its function is as follows. One of the primary rRNA binding proteins, it binds specifically to the 5'-end of 16S ribosomal RNA. The chain is Small ribosomal subunit protein uS17 from Symbiobacterium thermophilum (strain DSM 24528 / JCM 14929 / IAM 14863 / T).